The sequence spans 553 residues: Putative transport protein ASA_0825 (553 aa).

Helical transmembrane passes span 4-24 (IALSISMLSLVAVLGLWLGNW), 29-49 (VGLGIGGVLFGGIIVGHFAGV), 65-85 (FGLILFVYTIGIQVGPGFFSS), 95-115 (GFAALLVILGCVVAAGLHQLF), and 158-178 (MGYAVAYPFGICGILLTMWLV). RCK C-terminal domains are found at residues 191 to 276 (DLFE…VLGE) and 279 to 361 (ETSL…VVGN). 6 helical membrane passes run 371-391 (MLPVFIGIGLGVLLGSIPFYL), 403-425 (AGGPLVVALILSRIGSIGKLYWF), 439-459 (IVLFLAVVGFKSGAGFVDTLI), 465-485 (AWMMYGMAITLIPLLVVGVLA), 493-513 (YLTLCGLLAGSMTDPPALAFA), and 533-553 (LVMFLRIISPQLLAILLWAGV).

Belongs to the AAE transporter (TC 2.A.81) family. YidE subfamily.

The protein resides in the cell membrane. This chain is Putative transport protein ASA_0825, found in Aeromonas salmonicida (strain A449).